The primary structure comprises 337 residues: MANRGARHARTEDSDNTINYVQCDGLAVMKMVKHCHEESSNMDLAQGALLGLVVDKCLEITNCFPFPKSGDETMDEEMYQLTVMRRLRRVNVDHLHVGWYQSSDVGNSLSLALLESQYHYQTSIEESVVVVYDTQKSSRGFLCLKAYRLTPQAIQMYKDGDFTPEAFRTLKVGYESLFAEIPIVIKNSPLTNIMMSELNELLPEDKGHNFLDLGTASVLENHMRSLIERVDELYQEAVRYNKYQQVVFKQDTEKHRALAKLAAENAVRTSKGEPTVPEEEVIKQFRPMPVPARLTATITSGQINTHAQHIAQFCSQSLAKLFITESLQNAKETKEIK.

The MPN domain occupies 21-153 (VQCDGLAVMK…LKAYRLTPQA (133 aa)).

Belongs to the eIF-3 subunit H family. As to quaternary structure, component of the eukaryotic translation initiation factor 3 (eIF-3) complex. The eIF-3 complex interacts with pix. Interacts with mxt.

It localises to the cytoplasm. In terms of biological role, component of the eukaryotic translation initiation factor 3 (eIF-3) complex, which is involved in protein synthesis of a specialized repertoire of mRNAs and, together with other initiation factors, stimulates binding of mRNA and methionyl-tRNAi to the 40S ribosome. The eIF-3 complex specifically targets and initiates translation of a subset of mRNAs involved in cell proliferation. This Drosophila virilis (Fruit fly) protein is Eukaryotic translation initiation factor 3 subunit H.